A 229-amino-acid chain; its full sequence is Potassium/proton antiporter CemA (229 aa).

A run of 2 helical transmembrane segments spans residues 7–27 and 106–126; these read LASL…SISF and IISH…YFIL.

This sequence belongs to the CemA family.

The protein localises to the plastid. The protein resides in the chloroplast inner membrane. It carries out the reaction K(+)(in) + H(+)(out) = K(+)(out) + H(+)(in). Functionally, contributes to K(+)/H(+) antiport activity by supporting proton efflux to control proton extrusion and homeostasis in chloroplasts in a light-dependent manner to modulate photosynthesis. Prevents excessive induction of non-photochemical quenching (NPQ) under continuous-light conditions. Indirectly promotes efficient inorganic carbon uptake into chloroplasts. The chain is Potassium/proton antiporter CemA from Cycas taitungensis (Prince sago).